The primary structure comprises 432 residues: Phosphomethylpyrimidine synthase (432 aa).

Substrate-binding positions include Asn-66, Met-95, Tyr-124, His-163, 185 to 187 (SRG), 226 to 229 (DGMR), and Glu-265. His-269 lines the Zn(2+) pocket. Substrate is bound at residue Tyr-292. His-333 serves as a coordination point for Zn(2+). [4Fe-4S] cluster-binding residues include Cys-409, Cys-412, and Cys-416.

This sequence belongs to the ThiC family. It depends on [4Fe-4S] cluster as a cofactor.

It catalyses the reaction 5-amino-1-(5-phospho-beta-D-ribosyl)imidazole + S-adenosyl-L-methionine = 4-amino-2-methyl-5-(phosphooxymethyl)pyrimidine + CO + 5'-deoxyadenosine + formate + L-methionine + 3 H(+). Its pathway is cofactor biosynthesis; thiamine diphosphate biosynthesis. Its function is as follows. Catalyzes the synthesis of the hydroxymethylpyrimidine phosphate (HMP-P) moiety of thiamine from aminoimidazole ribotide (AIR) in a radical S-adenosyl-L-methionine (SAM)-dependent reaction. The polypeptide is Phosphomethylpyrimidine synthase (Desulforudis audaxviator (strain MP104C)).